The following is a 497-amino-acid chain: Thiamine transporter 1 (497 aa).

At methionine 1 the chain carries N-acetylmethionine. At 1-28 the chain is on the cytoplasmic side; the sequence is MDVPGPVSRRAAAAAATVLLRTARVRRE. The helical transmembrane segment at 29-46 threads the bilayer; the sequence is CWFLPTALLCAYGFFASL. Topologically, residues 47 to 72 are extracellular; the sequence is RPSEPFLTPYLLGPDKNLTEREVFNE. A glycan (N-linked (GlcNAc...) asparagine) is linked at asparagine 63. A helical membrane pass occupies residues 73 to 91; sequence IYPVWTYSYLVLLFPVFLA. Over 92–99 the chain is Cytoplasmic; that stretch reads TDYLRYKP. Residues 100-118 form a helical membrane-spanning segment; the sequence is VVLLQGLSLIVTWFMLLYA. Topologically, residues 119 to 128 are extracellular; sequence QGLLAIQFLE. A helical transmembrane segment spans residues 129–149; that stretch reads FFYGIATATEIAYYSYIYSVV. Over 150–165 the chain is Cytoplasmic; sequence DLGMYQKVTSYCRSAT. Residues 166–185 form a helical membrane-spanning segment; sequence LVGFTVGSVLGQILVSVAGW. At 186–191 the chain is on the extracellular side; it reads SLFSLN. A helical membrane pass occupies residues 192–208; the sequence is VISLTCVSVAFAVAWFL. Topologically, residues 209–285 are cytoplasmic; it reads PMPQKSLFFH…LLVLKVLWND (77 aa). A Phosphoserine modification is found at serine 222. The helical transmembrane segment at 286–310 threads the bilayer; that stretch reads FLMCYSSRPLLCWSVWWALSTCGYF. The Extracellular portion of the chain corresponds to 311 to 337; that stretch reads QVVNYTQGLWEKVMPSRYAAIYNGGVE. Residue asparagine 314 is glycosylated (N-linked (GlcNAc...) asparagine). The helical transmembrane segment at 338–354 threads the bilayer; sequence AVSTLLGAVAVFAVGYI. Residues 355 to 363 are Cytoplasmic-facing; sequence KISWSTWGE. The chain crosses the membrane as a helical span at residues 364–380; the sequence is MTLSLFSLLIAAAVYIM. Residues 381–386 are Extracellular-facing; sequence DTVGNI. Residues 387–409 traverse the membrane as a helical segment; it reads WVCYASYVVFRIIYMLLITIATF. Residues 410 to 419 lie on the Cytoplasmic side of the membrane; the sequence is QIAANLSMER. Residues 420 to 443 traverse the membrane as a helical segment; it reads YALVFGVNTFIALALQTLLTLIVV. The Extracellular segment spans residues 444-455; it reads DASGLGLEITTQ. A helical transmembrane segment spans residues 456–479; it reads FLIYASYFALIAVVFLASGAVSVM. The Cytoplasmic portion of the chain corresponds to 480 to 497; sequence KKCRKLEDPQSSSQVTTS.

This sequence belongs to the reduced folate carrier (RFC) transporter (TC 2.A.48) family. Interacts with TSPAN1; this interaction increases the stability of SLC19A2. Interacts with TMEM63B. Ubiquitous; most abundant in skeletal and cardiac muscle. Medium expression in placenta, heart, liver and kidney, low in lung.

The protein localises to the cell membrane. It catalyses the reaction thiamine(out) + H(+)(in) = thiamine(in) + H(+)(out). The enzyme catalyses pyridoxine(out) + n H(+)(out) = pyridoxine(in) + n H(+)(in). Its activity is regulated as follows. Pyridoxine transport is inhibited by carbonyl cyanide p-trifluoromethoxyphenylhydrazone (FCCP) and carbonyl cyanide m-chlorophenylhydrazone (CCCP). In terms of biological role, high-affinity transporter for the intake of thiamine. Mediates H(+)-dependent pyridoxine transport. This is Thiamine transporter 1 (SLC19A2) from Homo sapiens (Human).